We begin with the raw amino-acid sequence, 125 residues long: Small ribosomal subunit protein uS13 (125 aa).

This sequence belongs to the universal ribosomal protein uS13 family. In terms of assembly, part of the 30S ribosomal subunit. Forms a loose heterodimer with protein S19. Forms two bridges to the 50S subunit in the 70S ribosome.

Functionally, located at the top of the head of the 30S subunit, it contacts several helices of the 16S rRNA. In the 70S ribosome it contacts the 23S rRNA (bridge B1a) and protein L5 of the 50S subunit (bridge B1b), connecting the 2 subunits; these bridges are implicated in subunit movement. Contacts the tRNAs in the A and P-sites. This chain is Small ribosomal subunit protein uS13, found in Rickettsia africae (strain ESF-5).